Here is a 332-residue protein sequence, read N- to C-terminus: Spherulin-4 (332 aa).

The signal sequence occupies residues 1–22; it reads MNIKIVVLVIFAILLGSALAWH. The tract at residues 26–60 is disordered; sequence HHNPTKAPTEAPHRGGGGGGGHNTPAPTQPPRQNT.

The protein is Spherulin-4 of Physarum polycephalum (Slime mold).